Consider the following 345-residue polypeptide: Biotin synthase (345 aa).

The region spanning 67 to 295 (YKVQLASLLS…KSRIRLSAGR (229 aa)) is the Radical SAM core domain. Residues cysteine 82, cysteine 86, and cysteine 89 each coordinate [4Fe-4S] cluster. [2Fe-2S] cluster-binding residues include cysteine 126, cysteine 158, cysteine 218, and arginine 290.

This sequence belongs to the radical SAM superfamily. Biotin synthase family. In terms of assembly, homodimer. It depends on [4Fe-4S] cluster as a cofactor. Requires [2Fe-2S] cluster as cofactor.

It carries out the reaction (4R,5S)-dethiobiotin + (sulfur carrier)-SH + 2 reduced [2Fe-2S]-[ferredoxin] + 2 S-adenosyl-L-methionine = (sulfur carrier)-H + biotin + 2 5'-deoxyadenosine + 2 L-methionine + 2 oxidized [2Fe-2S]-[ferredoxin]. It participates in cofactor biosynthesis; biotin biosynthesis; biotin from 7,8-diaminononanoate: step 2/2. Functionally, catalyzes the conversion of dethiobiotin (DTB) to biotin by the insertion of a sulfur atom into dethiobiotin via a radical-based mechanism. This is Biotin synthase from Prochlorococcus marinus (strain NATL2A).